The following is a 124-amino-acid chain: Large ribosomal subunit protein uL22 (124 aa).

This sequence belongs to the universal ribosomal protein uL22 family. In terms of assembly, part of the 50S ribosomal subunit.

This protein binds specifically to 23S rRNA; its binding is stimulated by other ribosomal proteins, e.g. L4, L17, and L20. It is important during the early stages of 50S assembly. It makes multiple contacts with different domains of the 23S rRNA in the assembled 50S subunit and ribosome. Functionally, the globular domain of the protein is located near the polypeptide exit tunnel on the outside of the subunit, while an extended beta-hairpin is found that lines the wall of the exit tunnel in the center of the 70S ribosome. This Macrococcus caseolyticus (strain JCSC5402) (Macrococcoides caseolyticum) protein is Large ribosomal subunit protein uL22.